Reading from the N-terminus, the 294-residue chain is ATP synthase gamma chain (294 aa).

It belongs to the ATPase gamma chain family. As to quaternary structure, F-type ATPases have 2 components, CF(1) - the catalytic core - and CF(0) - the membrane proton channel. CF(1) has five subunits: alpha(3), beta(3), gamma(1), delta(1), epsilon(1). CF(0) has three main subunits: a, b and c.

It is found in the cell inner membrane. Functionally, produces ATP from ADP in the presence of a proton gradient across the membrane. The gamma chain is believed to be important in regulating ATPase activity and the flow of protons through the CF(0) complex. This Paraburkholderia phytofirmans (strain DSM 17436 / LMG 22146 / PsJN) (Burkholderia phytofirmans) protein is ATP synthase gamma chain.